The chain runs to 374 residues: Methylthioribose-1-phosphate isomerase (374 aa).

Aspartate 256 acts as the Proton donor in catalysis.

The protein belongs to the eIF-2B alpha/beta/delta subunits family. MtnA subfamily.

Its subcellular location is the cytoplasm. It is found in the nucleus. It carries out the reaction 5-(methylsulfanyl)-alpha-D-ribose 1-phosphate = 5-(methylsulfanyl)-D-ribulose 1-phosphate. Its pathway is amino-acid biosynthesis; L-methionine biosynthesis via salvage pathway; L-methionine from S-methyl-5-thio-alpha-D-ribose 1-phosphate: step 1/6. Catalyzes the interconversion of methylthioribose-1-phosphate (MTR-1-P) into methylthioribulose-1-phosphate (MTRu-1-P). In Leishmania braziliensis, this protein is Methylthioribose-1-phosphate isomerase.